The sequence spans 226 residues: Phosphatidylserine decarboxylase proenzyme (226 aa).

Ser-184 acts as the Schiff-base intermediate with substrate; via pyruvic acid in catalysis. Ser-184 is modified (pyruvic acid (Ser); by autocatalysis).

The protein belongs to the phosphatidylserine decarboxylase family. PSD-A subfamily. As to quaternary structure, heterodimer of a large membrane-associated beta subunit and a small pyruvoyl-containing alpha subunit. It depends on pyruvate as a cofactor. Is synthesized initially as an inactive proenzyme. Formation of the active enzyme involves a self-maturation process in which the active site pyruvoyl group is generated from an internal serine residue via an autocatalytic post-translational modification. Two non-identical subunits are generated from the proenzyme in this reaction, and the pyruvate is formed at the N-terminus of the alpha chain, which is derived from the carboxyl end of the proenzyme. The post-translation cleavage follows an unusual pathway, termed non-hydrolytic serinolysis, in which the side chain hydroxyl group of the serine supplies its oxygen atom to form the C-terminus of the beta chain, while the remainder of the serine residue undergoes an oxidative deamination to produce ammonia and the pyruvoyl prosthetic group on the alpha chain.

It localises to the cell membrane. It catalyses the reaction a 1,2-diacyl-sn-glycero-3-phospho-L-serine + H(+) = a 1,2-diacyl-sn-glycero-3-phosphoethanolamine + CO2. It participates in phospholipid metabolism; phosphatidylethanolamine biosynthesis; phosphatidylethanolamine from CDP-diacylglycerol: step 2/2. Its function is as follows. Catalyzes the formation of phosphatidylethanolamine (PtdEtn) from phosphatidylserine (PtdSer). The polypeptide is Phosphatidylserine decarboxylase proenzyme (Ehrlichia chaffeensis (strain ATCC CRL-10679 / Arkansas)).